A 150-amino-acid chain; its full sequence is MKVIFLADVKGKGKKGEIKEVPTGYAQNFLIKKNLAKEATSQSIGELKGKQKAEEKAQAEILAEAQAVKAVLDEDKTRVQFQEKVGPDGRTFGSITAKKISEELQKQFGVKVDKRHIVLDHPIRAIGLFEVPVKLHKELTAEIKLAITEA.

Belongs to the bacterial ribosomal protein bL9 family.

In terms of biological role, binds to the 23S rRNA. This Streptococcus pyogenes serotype M5 (strain Manfredo) protein is Large ribosomal subunit protein bL9.